The sequence spans 351 residues: Probable aldo-keto reductase 2 (351 aa).

Tyr-67 functions as the Proton donor in the catalytic mechanism. Residue His-134 coordinates substrate. An NADP(+)-binding site is contributed by 213–223; sequence SPLGRGFFSAG. Positions 317–351 are disordered; the sequence is YASTDDVRGDRYPQAMANTTWQNSETPPLSSWKAQ. The segment covering 332–351 has biased composition (polar residues); the sequence is MANTTWQNSETPPLSSWKAQ.

The protein belongs to the aldo/keto reductase family.

This Oryza sativa subsp. japonica (Rice) protein is Probable aldo-keto reductase 2.